Reading from the N-terminus, the 389-residue chain is DNA replication and repair protein RecF (389 aa).

An ATP-binding site is contributed by 30-37; it reads GPNGFGKT.

It belongs to the RecF family.

It is found in the cytoplasm. Its function is as follows. The RecF protein is involved in DNA metabolism; it is required for DNA replication and normal SOS inducibility. RecF binds preferentially to single-stranded, linear DNA. It also seems to bind ATP. This is DNA replication and repair protein RecF from Mycolicibacterium gilvum (strain PYR-GCK) (Mycobacterium gilvum (strain PYR-GCK)).